Consider the following 320-residue polypeptide: Olfactory receptor 2T12 (320 aa).

Over 1–23 (MEMRNTTPDFILLGLFNHTRAHQ) the chain is Extracellular. Asparagine 17 carries an N-linked (GlcNAc...) asparagine glycan. Residues 24–47 (VLFMMLLATVLTSLFSNALMILLI) form a helical membrane-spanning segment. Residues 48–55 (HWDHRLHR) lie on the Cytoplasmic side of the membrane. Residues 56 to 77 (PMYFLLSQLSLMDMMLVSTTVP) form a helical membrane-spanning segment. The Extracellular portion of the chain corresponds to 78-98 (KMAADYLTGNKAISRAGCGVQ). The cysteines at positions 95 and 187 are disulfide-linked. Residues 99-118 (IFFLPTLGGGECFLLAAMAY) form a helical membrane-spanning segment. Residues 119-137 (DRYAAVCHPLRYPTLMSWQ) are Cytoplasmic-facing. The helical transmembrane segment at 138–156 (LCLRMTMSSWLLGAADGLL) threads the bilayer. The Extracellular portion of the chain corresponds to 157 to 193 (QAVATLSFPYCGAHEIDHFFCEAPVLVRLACADTSVF). Residues 194–217 (ENAMYICCVLMLLVPFSLILSSYG) form a helical membrane-spanning segment. Topologically, residues 218-234 (LILAAVLLMRSTEARKK) are cytoplasmic. The chain crosses the membrane as a helical span at residues 235-257 (AFATCSSHVAVVGLFYGAGIFTY). Residues 258–270 (MRPKSHRSTNHDK) lie on the Extracellular side of the membrane. The helical transmembrane segment at 271 to 290 (VVSAFYTMFTPLLNPLIYSV) threads the bilayer. Residues 291-320 (RNSEVKEALKRWLGTCVNLKHQQNEAHRSR) are Cytoplasmic-facing.

The protein belongs to the G-protein coupled receptor 1 family.

It is found in the cell membrane. Its function is as follows. Odorant receptor. The chain is Olfactory receptor 2T12 (OR2T12) from Homo sapiens (Human).